A 1609-amino-acid polypeptide reads, in one-letter code: Laminin subunit gamma-1 (1609 aa).

The first 33 residues, 1-33, serve as a signal peptide directing secretion; sequence MRGSHRAAPALRPRGRLWPVLAVLAAAAAAGCA. Residues 46–285 form the Laminin N-terminal domain; it reads RPQRCMPEFV…AISDFAVGGR (240 aa). N-linked (GlcNAc...) asparagine glycans are attached at residues N60 and N134. 16 cysteine pairs are disulfide-bonded: C286-C295, C288-C305, C307-C316, C319-C339, C342-C351, C344-C367, C370-C379, C382-C395, C398-C410, C400-C416, C418-C427, C430-C442, C445-C456, C447-C463, C465-C474, and C477-C492. 4 consecutive Laminin EGF-like domains span residues 286–341, 342–397, 398–444, and 445–494; these read CKCN…ECLP, CDCN…ACSS, CHCS…GCRP, and CSCD…GCTP. The Laminin EGF-like 5; first part domain occupies 495–504; that stretch reads CFCFGHSSVC. The 176-residue stretch at 514-689 folds into the Laminin IV type A domain; it reads SISSTFQIDE…PGVPATWVES (176 aa). N576 and N650 each carry an N-linked (GlcNAc...) asparagine glycan. One can recognise a Laminin EGF-like 5; second part domain in the interval 690 to 723; sequence CTCPVGYGGQFCEMCLSGYRRETPNLGPYSPCVL. Intrachain disulfides connect C724–C733, C726–C740, C742–C751, C754–C770, C773–C781, C775–C792, C795–C804, C807–C825, C828–C842, C830–C849, C852–C861, C864–C881, C884–C898, C886–C905, C907–C916, C919–C932, C935–C947, C937–C954, C956–C965, C968–C980, C983–C995, C985–C1001, C1003–C1012, and C1015–C1028. Laminin EGF-like domains lie at 724–772, 773–827, 828–883, 884–934, 935–982, and 983–1030; these read CACN…DCQP, CPCP…LCRL, CQCS…KCKA, CNCN…GCER, CDCH…GCKP, and CDCH…GCQE. 2 N-linked (GlcNAc...) asparagine glycosylation sites follow: N1022 and N1107. The interval 1030–1609 is domain II and I; that stretch reads ECPACYRLVK…CFNTPSIEKP (580 aa). The stretch at 1038 to 1609 forms a coiled coil; that stretch reads VKDKVADHRV…CFNTPSIEKP (572 aa). S1149 carries the phosphoserine; by FAM20C modification. N-linked (GlcNAc...) asparagine glycans are attached at residues N1161, N1175, N1205, N1223, N1241, N1380, N1395, and N1439. S1493 is modified (phosphoserine).

In terms of assembly, laminin is a complex glycoprotein, consisting of three different polypeptide chains (alpha, beta, gamma), which are bound to each other by disulfide bonds into a cross-shaped molecule comprising one long and three short arms with globules at each end. Gamma-1 is a subunit of laminin-1 (laminin-111 or EHS laminin), laminin-2 (laminin-211 or merosin), laminin-3 (laminin-121 or S-laminin), laminin-4 (laminin-221 or S-merosin), laminin-6 (laminin-311 or K-laminin), laminin-7 (laminin-321 or KS-laminin), laminin-8 (laminin-411), laminin-9 (laminin-421), laminin-10 (laminin-511) and laminin-11 (laminin-521). Interacts with SVEP1. As to expression, found in the basement membranes (major component).

The protein resides in the secreted. Its subcellular location is the extracellular space. It localises to the extracellular matrix. It is found in the basement membrane. Binding to cells via a high affinity receptor, laminin is thought to mediate the attachment, migration and organization of cells into tissues during embryonic development by interacting with other extracellular matrix components. This Homo sapiens (Human) protein is Laminin subunit gamma-1.